An 89-amino-acid chain; its full sequence is Large ribosomal subunit protein bL27 (89 aa).

Positions 1–22 (MAHKKAGGSSRNGRDSESKRLG) are disordered.

This sequence belongs to the bacterial ribosomal protein bL27 family.

In Bartonella tribocorum (strain CIP 105476 / IBS 506), this protein is Large ribosomal subunit protein bL27.